The sequence spans 102 residues: Large ribosomal subunit protein bL21 (102 aa).

This sequence belongs to the bacterial ribosomal protein bL21 family. As to quaternary structure, part of the 50S ribosomal subunit. Contacts protein L20.

Functionally, this protein binds to 23S rRNA in the presence of protein L20. The protein is Large ribosomal subunit protein bL21 of Marinomonas sp. (strain MWYL1).